A 427-amino-acid chain; its full sequence is Acetylornithine aminotransferase, mitochondrial (427 aa).

The residue at position 279 (Lys279) is an N6-(pyridoxal phosphate)lysine.

This sequence belongs to the class-III pyridoxal-phosphate-dependent aminotransferase family. Requires pyridoxal 5'-phosphate as cofactor.

It is found in the mitochondrion matrix. It catalyses the reaction N(2)-acetyl-L-ornithine + 2-oxoglutarate = N-acetyl-L-glutamate 5-semialdehyde + L-glutamate. The protein operates within amino-acid biosynthesis; L-arginine biosynthesis; N(2)-acetyl-L-ornithine from L-glutamate: step 4/4. The protein is Acetylornithine aminotransferase, mitochondrial (ARG8) of Candida glabrata (strain ATCC 2001 / BCRC 20586 / JCM 3761 / NBRC 0622 / NRRL Y-65 / CBS 138) (Yeast).